The primary structure comprises 348 residues: Heat-inducible transcription repressor HrcA (348 aa).

This sequence belongs to the HrcA family.

Its function is as follows. Negative regulator of class I heat shock genes (grpE-dnaK-dnaJ and groELS operons). Prevents heat-shock induction of these operons. The chain is Heat-inducible transcription repressor HrcA from Lacticaseibacillus casei (strain BL23) (Lactobacillus casei).